A 30-amino-acid chain; its full sequence is Dermaseptin-S3 (30 aa).

Belongs to the frog skin active peptide (FSAP) family. Dermaseptin subfamily. Monomer and oligomer. Forms aggregates in aqueous environments. Expressed by the skin glands.

The protein localises to the secreted. In terms of biological role, potent antimicrobial peptide with activity against bacteria and protozoa. Also has activity against fungi. Probably acts by disturbing membrane functions with its amphipathic structure. Binds to healthy erythrocytes (this binding is receptor independent), but has very weak hemolytic activity. Does not bind to P.falciparum infected erythrocytes, but accumulates within the parasite. Kills the parasite, but has no hemolytic activity on the host cell. The protein is Dermaseptin-S3 of Phyllomedusa sauvagei (Sauvage's leaf frog).